The sequence spans 503 residues: Sodium/hydrogen exchanger 3 (503 aa).

The Cytoplasmic segment spans residues 1–22; the sequence is MVIGLSTMLEKTEALFASDHAS. Residues 23–43 traverse the membrane as a helical segment; that stretch reads VVSMNLFVALLCACIVLGHLL. Residues 44-51 lie on the Vacuolar side of the membrane; it reads EETRWMNE. A glycan (N-linked (GlcNAc...) asparagine) is linked at N50. A helical membrane pass occupies residues 52–72; the sequence is SITALIIGSCTGIVILLISGG. Topologically, residues 73–76 are cytoplasmic; the sequence is KSSR. The segment at residues 77–97 is an intramembrane region (helical); sequence ILVFSEDLFFIYLLPPIIFNA. The Cytoplasmic segment spans residues 98 to 109; the sequence is GFQVKKKQFFRN. A helical transmembrane segment spans residues 110-130; that stretch reads FMTIMLFGAIGTLISFVIISF. Topologically, residues 131–138 are vacuolar; sequence GAKHLFEK. The chain crosses the membrane as a helical span at residues 139 to 159; it reads MNIGDLTIADYLAIGAIFSAT. Residues 160-174 are Cytoplasmic-facing; the sequence is DSVCTLQVLNQDETP. Residues 175–195 traverse the membrane as a helical segment; it reads LLYSLVFGEGVVNDATSVVLF. Residues 196–219 are Vacuolar-facing; it reads NAIQRFDLTNINSAIALEFAGNFF. Residues 220 to 240 traverse the membrane as a helical segment; the sequence is YLFILSTALGVAAGLLSAFVI. Topologically, residues 241–265 are cytoplasmic; it reads KKLYIGRHSTDREVALMMLLAYLSY. Residues 266–286 traverse the membrane as a helical segment; it reads MLAELFHLSSILTVFFCGIVM. Over 287 to 305 the chain is Vacuolar; it reads SHYTWHNVTDKSKVTTKHT. A glycan (N-linked (GlcNAc...) asparagine) is linked at N293. Residues 306–326 form a helical membrane-spanning segment; that stretch reads FAAMSFLAEIFIFLYVGMDAL. The Cytoplasmic portion of the chain corresponds to 327–345; the sequence is DIEKWDVVRNSPGQSIGVS. Residues 346–366 traverse the membrane as a helical segment; that stretch reads SILLGLILLGRAAFVFPLSFL. The Vacuolar portion of the chain corresponds to 367-383; the sequence is SNLTKSSPDEKIDLKKQ. N-linked (GlcNAc...) asparagine glycosylation is present at N368. Residues 384-406 traverse the membrane as a helical segment; it reads VTIWWAGLMRGAVSMALAYNQFT. The Cytoplasmic segment spans residues 407 to 416; it reads TSGHTKVLGN. The chain crosses the membrane as a helical span at residues 417–437; that stretch reads AIMITSTITVVLFSTVVFGLL. At 438-503 the chain is on the vacuolar side; it reads TKPLVKHLQP…FWKSPSRFTH (66 aa).

This sequence belongs to the monovalent cation:proton antiporter 1 (CPA1) transporter (TC 2.A.36) family. As to expression, expressed in roots.

It is found in the vacuole membrane. It catalyses the reaction Na(+)(in) + H(+)(out) = Na(+)(out) + H(+)(in). The catalysed reaction is K(+)(in) + H(+)(out) = K(+)(out) + H(+)(in). May act in low affinity electroneutral exchange of protons for cations such as Na(+) or K(+) across membranes. May also exchange Li(+) and Cs(+) with a lower affinity. In Arabidopsis thaliana (Mouse-ear cress), this protein is Sodium/hydrogen exchanger 3 (NHX3).